The primary structure comprises 145 residues: Venom protein 30.1 (145 aa).

Positions 1–18 (MIIVKLFTCLLMVSSVLT) are cleaved as a signal peptide.

Post-translationally, contains 5 disulfide bonds. As to expression, expressed by the venom gland.

Its subcellular location is the secreted. The sequence is that of Venom protein 30.1 from Lychas mucronatus (Chinese swimming scorpion).